Reading from the N-terminus, the 116-residue chain is Prefoldin subunit beta (116 aa).

The protein belongs to the prefoldin subunit beta family. In terms of assembly, heterohexamer of two alpha and four beta subunits.

Its subcellular location is the cytoplasm. Functionally, molecular chaperone capable of stabilizing a range of proteins. Seems to fulfill an ATP-independent, HSP70-like function in archaeal de novo protein folding. The protein is Prefoldin subunit beta of Thermococcus onnurineus (strain NA1).